A 91-amino-acid polypeptide reads, in one-letter code: Acyl-CoA-binding domain-containing protein 1 (91 aa).

Residues L3–A88 enclose the ACB domain. Residues K15, Y30–K34, K56, and Y75 contribute to the an acyl-CoA site.

Belongs to the ACBP family. In terms of tissue distribution, highly expressed in leaves. Expressed at low levels in roots and seeds.

It is found in the cytoplasm. Its subcellular location is the cytosol. Functionally, binds medium- and long-chain acyl-CoA esters with high affinity. Can interact in vitro with palmitoyl-CoA, oleoyl-CoA, linoleoyl-CoA and linolenoyl-CoA. Binds phosphatidic acid (PA) and phosphatidylcholine (PC) in vitro. May play a role in the biosynthesis of phospholipids. In Oryza sativa subsp. japonica (Rice), this protein is Acyl-CoA-binding domain-containing protein 1.